We begin with the raw amino-acid sequence, 400 residues long: Ornithine aminotransferase (400 aa).

At Lys254 the chain carries N6-(pyridoxal phosphate)lysine.

The protein belongs to the class-III pyridoxal-phosphate-dependent aminotransferase family. OAT subfamily. Requires pyridoxal 5'-phosphate as cofactor.

It is found in the cytoplasm. It carries out the reaction a 2-oxocarboxylate + L-ornithine = L-glutamate 5-semialdehyde + an L-alpha-amino acid. The protein operates within amino-acid biosynthesis; L-proline biosynthesis; L-glutamate 5-semialdehyde from L-ornithine: step 1/1. Its function is as follows. Catalyzes the interconversion of ornithine to glutamate semialdehyde. The protein is Ornithine aminotransferase of Exiguobacterium sp. (strain ATCC BAA-1283 / AT1b).